A 192-amino-acid polypeptide reads, in one-letter code: uncharacterized protein (192 aa).

It to R.meliloti RA0936 and y4nF.

This is an uncharacterized protein from Sinorhizobium fredii (strain NBRC 101917 / NGR234).